We begin with the raw amino-acid sequence, 207 residues long: Small ribosomal subunit protein uS4 (207 aa).

The segment at K33–N54 is disordered. The span at G42–G53 shows a compositional bias: polar residues. The S4 RNA-binding domain occupies S97–L160.

The protein belongs to the universal ribosomal protein uS4 family. As to quaternary structure, part of the 30S ribosomal subunit. Contacts protein S5. The interaction surface between S4 and S5 is involved in control of translational fidelity.

Its function is as follows. One of the primary rRNA binding proteins, it binds directly to 16S rRNA where it nucleates assembly of the body of the 30S subunit. Functionally, with S5 and S12 plays an important role in translational accuracy. The sequence is that of Small ribosomal subunit protein uS4 from Cupriavidus pinatubonensis (strain JMP 134 / LMG 1197) (Cupriavidus necator (strain JMP 134)).